The sequence spans 320 residues: D-amino-acid oxidase (320 aa).

The FAD site is built by G18, G19, V20, I21, T47, T48, S49, G53, G54, L55, V161, and T176. The D-proline site is built by Y220 and R275. D-serine contacts are provided by Y220 and R275. Residues R275, G301, G302, G304, and T306 each coordinate FAD. Residue G302 coordinates D-proline. Position 302 (G302) interacts with D-serine.

Belongs to the DAMOX/DASOX family. Requires FAD as cofactor.

Its subcellular location is the cytoplasm. It is found in the secreted. The protein localises to the cell wall. The enzyme catalyses a D-alpha-amino acid + O2 + H2O = a 2-oxocarboxylate + H2O2 + NH4(+). It catalyses the reaction D-leucine + O2 + H2O = 4-methyl-2-oxopentanoate + H2O2 + NH4(+). It carries out the reaction D-valine + O2 + H2O = 3-methyl-2-oxobutanoate + H2O2 + NH4(+). The catalysed reaction is D-isoleucine + O2 + H2O = (R)-3-methyl-2-oxopentanoate + H2O2 + NH4(+). The enzyme catalyses D-methionine + O2 + H2O = 4-methylsulfanyl-2-oxobutanoate + H2O2 + NH4(+). Its function is as follows. Catalyzes the oxidative deamination of D-amino acids with broad substrate specificity. This chain is D-amino-acid oxidase, found in Streptomyces coelicolor (strain ATCC BAA-471 / A3(2) / M145).